The primary structure comprises 201 residues: Putative lipoprotein LppC (201 aa).

The N-terminal stretch at 1–23 (MTSTLHRTPLATAGLALVVALGG) is a signal peptide. Cysteine 24 carries the N-palmitoyl cysteine lipid modification. Cysteine 24 carries the S-diacylglycerol cysteine lipid modification. Prevents bacterial uptake by a human macrophage-like cell line regions lie at residues 77 to 96 (GANVAPPLTWSSPAGAAELA), 97 to 116 (LVVDDPDAVGGLYVHWIVTG), and 117 to 136 (IAPGSGSTADGQTPAGGHSV). Residues 122–141 (GSTADGQTPAGGHSVPNSGG) are disordered.

It belongs to the UPF0098 family.

It is found in the cell membrane. It localises to the cell surface. Its function is as follows. Probably involved in bacterial recognition and uptake by its host (human). The sequence is that of Putative lipoprotein LppC from Mycobacterium tuberculosis (strain ATCC 25618 / H37Rv).